The chain runs to 161 residues: Glycine cleavage system H protein 3 (161 aa).

The region spanning 40–122 (TVTLGLTDVG…YGDAWIVKIK (83 aa)) is the Lipoyl-binding domain. Residue Lys-81 is modified to N6-lipoyllysine.

Belongs to the GcvH family. The glycine cleavage system is composed of four proteins: P, T, L and H. (R)-lipoate is required as a cofactor.

The glycine cleavage system catalyzes the degradation of glycine. The H protein shuttles the methylamine group of glycine from the P protein to the T protein. In Aquifex aeolicus (strain VF5), this protein is Glycine cleavage system H protein 3.